The sequence spans 528 residues: Glycerol kinase 5 (528 aa).

Residues Ser28 and Ser29 each coordinate ATP. Residues Arg98, Asp275, and Gln276 each contribute to the glycerol site. Positions 297, 340, and 440 each coordinate ATP.

This sequence belongs to the FGGY kinase family.

The protein resides in the cytoplasm. The enzyme catalyses glycerol + ATP = sn-glycerol 3-phosphate + ADP + H(+). It participates in polyol metabolism; glycerol degradation via glycerol kinase pathway; sn-glycerol 3-phosphate from glycerol: step 1/1. Functionally, skin-specific kinase that plays a key role in glycerol metabolism, catalyzing its phosphorylation to produce sn-glycerol 3-phosphate. Involved in skin-specific regulation of sterol regulatory element-binding protein (SREBP) processing and lipid biosynthesis. The sequence is that of Glycerol kinase 5 (GK5) from Bos taurus (Bovine).